Consider the following 165-residue polypeptide: (2E)-enoyl-[ACP] glycyltransferase (165 aa).

The protein belongs to the FcoT family.

The catalysed reaction is a (3R)-3-[(carboxymethyl)amino]fatty acid + holo-[ACP] + H(+) = a (2E)-enoyl-[ACP] + glycine + H2O. The enzyme catalyses (3R)-3-[(carboxymethyl)amino]butanoate + holo-[ACP] + H(+) = (2E)-butenoyl-[ACP] + glycine + H2O. Involved in the biosynthesis of a unique class of isonitrile lipopeptides (INLPs). Catalyzes a Michael addition of glycine to the beta-position of an alpha,beta-unsaturated fatty acyl-[ACP], producing a (3R)-3-[(carboxymethyl)amino]fatty acid. Acts on the (2E)-butenoyl moiety loaded on the acyl-carrier protein ScoB, forming the product (3R)-3-[(carboxymethyl)amino]butanoate released from ScoB. This is (2E)-enoyl-[ACP] glycyltransferase from Streptomyces coeruleorubidus.